Reading from the N-terminus, the 235-residue chain is Proteasome subunit alpha (235 aa).

This sequence belongs to the peptidase T1A family. As to quaternary structure, the 20S proteasome core is composed of 14 alpha and 14 beta subunits that assemble into four stacked heptameric rings, resulting in a barrel-shaped structure. The two inner rings, each composed of seven catalytic beta subunits, are sandwiched by two outer rings, each composed of seven alpha subunits. The catalytic chamber with the active sites is on the inside of the barrel. Has a gated structure, the ends of the cylinder being occluded by the N-termini of the alpha-subunits. Is capped by the proteasome-associated ATPase, ARC.

It localises to the cytoplasm. It functions in the pathway protein degradation; proteasomal Pup-dependent pathway. With respect to regulation, the formation of the proteasomal ATPase ARC-20S proteasome complex, likely via the docking of the C-termini of ARC into the intersubunit pockets in the alpha-rings, may trigger opening of the gate for substrate entry. Interconversion between the open-gate and close-gate conformations leads to a dynamic regulation of the 20S proteasome proteolysis activity. In terms of biological role, component of the proteasome core, a large protease complex with broad specificity involved in protein degradation. The polypeptide is Proteasome subunit alpha (Paenarthrobacter aurescens (strain TC1)).